Consider the following 270-residue polypeptide: MQKRSVFFISDGTGITAESVGHLLAHFPTVSFKHIRLPFTDSEQKVQEALLKIAETEKADGARPIVVMTLVNTDLRDMLKQSNAVHLDVFGSFVDPLAEELQEQPSRTSGIAHSVLGNSYYERIDAINFTLNHDDGMTDFGLSEAQVILVGVSRCGKTPTSLYLAMQFGIKAANYPLIPEDLERGSLPEALKKYPEKLYGLSINPERLHSVRSERRPDSHYASLDNCRREIRLAEDLMHREGISWIDSTSRSIEELSTIILQKIRVNSNH.

ADP is bound at residue 151-158 (GVSRCGKT).

The protein belongs to the pyruvate, phosphate/water dikinase regulatory protein family. PSRP subfamily.

It carries out the reaction [pyruvate, water dikinase] + ADP = [pyruvate, water dikinase]-phosphate + AMP + H(+). It catalyses the reaction [pyruvate, water dikinase]-phosphate + phosphate + H(+) = [pyruvate, water dikinase] + diphosphate. Bifunctional serine/threonine kinase and phosphorylase involved in the regulation of the phosphoenolpyruvate synthase (PEPS) by catalyzing its phosphorylation/dephosphorylation. In Methylobacillus flagellatus (strain ATCC 51484 / DSM 6875 / VKM B-1610 / KT), this protein is Putative phosphoenolpyruvate synthase regulatory protein.